The primary structure comprises 349 residues: Protein BPS1, chloroplastic (349 aa).

Residues 1–43 (MARPQDPPRGFFPFGNPFKNLSSKNSVLSSKLLPLLNNFETNL) constitute a chloroplast transit peptide.

In terms of tissue distribution, expressed in roots, hypocotyls, cotyledons, leaves, flowers and siliques.

It localises to the plastid. Its subcellular location is the chloroplast. In terms of biological role, required for normal root and shoot development. Prevents constitutive production of a root mobile carotenoid-derived signaling compound that is capable of arresting shoot and leaf development. The polypeptide is Protein BPS1, chloroplastic (Arabidopsis thaliana (Mouse-ear cress)).